A 151-amino-acid chain; its full sequence is S-ribosylhomocysteine lyase (151 aa).

Fe cation is bound by residues H54, H58, and C121.

The protein belongs to the LuxS family. As to quaternary structure, homodimer. The cofactor is Fe cation.

The catalysed reaction is S-(5-deoxy-D-ribos-5-yl)-L-homocysteine = (S)-4,5-dihydroxypentane-2,3-dione + L-homocysteine. Its function is as follows. Involved in the synthesis of autoinducer 2 (AI-2) which is secreted by bacteria and is used to communicate both the cell density and the metabolic potential of the environment. The regulation of gene expression in response to changes in cell density is called quorum sensing. Catalyzes the transformation of S-ribosylhomocysteine (RHC) to homocysteine (HC) and 4,5-dihydroxy-2,3-pentadione (DPD). This chain is S-ribosylhomocysteine lyase, found in Clostridioides difficile (strain 630) (Peptoclostridium difficile).